The primary structure comprises 88 residues: UPF0297 protein Bcer98_3100 (88 aa).

This sequence belongs to the UPF0297 family.

The protein is UPF0297 protein Bcer98_3100 of Bacillus cytotoxicus (strain DSM 22905 / CIP 110041 / 391-98 / NVH 391-98).